The primary structure comprises 160 residues: MIP18 family protein F45G2.10 (160 aa).

Residues 1-32 form a disordered region; it reads MGQERLDNANPTLFDSKPRHRPVTGTERDESV.

This sequence belongs to the MIP18 family.

Functionally, may play a role in chromosome segregation through establishment of sister chromatid cohesion. In Caenorhabditis elegans, this protein is MIP18 family protein F45G2.10.